A 189-amino-acid polypeptide reads, in one-letter code: Xanthine phosphoribosyltransferase (189 aa).

Residues Leu20 and Asn27 each contribute to the xanthine site. 128–132 (ANGEA) is a 5-phospho-alpha-D-ribose 1-diphosphate binding site. A xanthine-binding site is contributed by Lys156.

Belongs to the purine/pyrimidine phosphoribosyltransferase family. Xpt subfamily. Homodimer.

It localises to the cytoplasm. The enzyme catalyses XMP + diphosphate = xanthine + 5-phospho-alpha-D-ribose 1-diphosphate. The protein operates within purine metabolism; XMP biosynthesis via salvage pathway; XMP from xanthine: step 1/1. Converts the preformed base xanthine, a product of nucleic acid breakdown, to xanthosine 5'-monophosphate (XMP), so it can be reused for RNA or DNA synthesis. The chain is Xanthine phosphoribosyltransferase from Lactobacillus delbrueckii subsp. bulgaricus (strain ATCC 11842 / DSM 20081 / BCRC 10696 / JCM 1002 / NBRC 13953 / NCIMB 11778 / NCTC 12712 / WDCM 00102 / Lb 14).